The primary structure comprises 368 residues: 1-deoxy-D-xylulose 5-phosphate reductoisomerase (368 aa).

Positions 10, 11, 12, 13, 38, and 100 each coordinate NADPH. Lys101 provides a ligand contact to 1-deoxy-D-xylulose 5-phosphate. Glu102 provides a ligand contact to NADPH. Position 125 (Asp125) interacts with Mn(2+). Residues Ser126, Glu127, Ser151, and His172 each coordinate 1-deoxy-D-xylulose 5-phosphate. Glu127 lines the Mn(2+) pocket. Gly178 contributes to the NADPH binding site. The 1-deoxy-D-xylulose 5-phosphate site is built by Ser185, Asn190, Lys191, and Glu194. Residue Glu194 coordinates Mn(2+).

The protein belongs to the DXR family. Mg(2+) serves as cofactor. It depends on Mn(2+) as a cofactor.

The catalysed reaction is 2-C-methyl-D-erythritol 4-phosphate + NADP(+) = 1-deoxy-D-xylulose 5-phosphate + NADPH + H(+). It participates in isoprenoid biosynthesis; isopentenyl diphosphate biosynthesis via DXP pathway; isopentenyl diphosphate from 1-deoxy-D-xylulose 5-phosphate: step 1/6. In terms of biological role, catalyzes the NADPH-dependent rearrangement and reduction of 1-deoxy-D-xylulose-5-phosphate (DXP) to 2-C-methyl-D-erythritol 4-phosphate (MEP). In Tropheryma whipplei (strain Twist) (Whipple's bacillus), this protein is 1-deoxy-D-xylulose 5-phosphate reductoisomerase.